We begin with the raw amino-acid sequence, 186 residues long: dCTP deaminase (186 aa).

107–112 (KSTYAR) serves as a coordination point for dCTP. The active-site Proton donor/acceptor is glutamate 133. Glutamine 152, tyrosine 166, and glutamine 176 together coordinate dCTP.

Belongs to the dCTP deaminase family. In terms of assembly, homotrimer.

The enzyme catalyses dCTP + H2O + H(+) = dUTP + NH4(+). It functions in the pathway pyrimidine metabolism; dUMP biosynthesis; dUMP from dCTP (dUTP route): step 1/2. Its function is as follows. Catalyzes the deamination of dCTP to dUTP. The polypeptide is dCTP deaminase (Campylobacter lari (strain RM2100 / D67 / ATCC BAA-1060)).